Reading from the N-terminus, the 590-residue chain is Acyl-CoA ligase sidI (590 aa).

A PTS2-type peroxisomal targeting signal motif is present at residues 6–14 (RLQQTLSHL). ATP is bound by residues 220–228 (TSGSTGNPK), 359–364 (SSYGLT), D449, and R464. T364 provides a ligand contact to substrate. CoA-binding positions include 472-474 (GGE) and 543-545 (YFF). Position 563 (K563) interacts with ATP.

Belongs to the ATP-dependent AMP-binding enzyme family.

The protein localises to the peroxisome. It participates in siderophore biosynthesis. In terms of biological role, acyl-CoA ligase; part of the siderophore biosynthetic pathway. Aspergillus fumigatus produces 4 types of siderophores, low-molecular-mass iron chelators, including excreted fusarinine C (FsC) and triacetylfusarinine C (TAFC) for iron uptake and intacellular ferricrocin (FC) for hyphal and hydroxyferricrocin (HFC) for conidial iron distribution and storage. TAFC consists of 3 N(2)-acetyl-N(5)-anhydromevalonyl-N(5)-hydroxyornithine residues cyclically linked by ester bonds; FC is a cyclic hexapeptide with the structure Gly-Ser-Gly-(N(5)-acetyl-N(5)-hydroxyornithine)x3. The biosynthesis of all four siderophores depends on the hydroxylation of ornithine, catalyzed by the monooxygenase sidA. Subsequently, the pathways for biosynthesis of extra- and intracellular siderophores split. For biosynthesis of extracellular siderophores, the transacylase sidF transfers anhydromevalonyl to N(5)-hydroxyornithine. The required anhydromevalonyl-CoA moiety is derived from mevalonate by CoA ligation and dehydration catalyzed by sidI and sidH respectively. The acetylation of N(5)-hydroxyornithine for FC biosynthesis involves the constitutively expressed sidL. FC is hydroxylated to HFC by an as yet uncharacterized enzyme during conidiation. Assembly of fusarinine C (FsC) and FC is catalyzed by two different nonribosomal peptide synthetases (NRPS), sidD and sidC respectively. Subsequently, sidG catalyzes N2-acetylation of FsC for forming TAFC. Both extra- and intracellular siderophores are crucial for growth during iron limitation and virulence. The polypeptide is Acyl-CoA ligase sidI (Aspergillus fumigatus (strain ATCC MYA-4609 / CBS 101355 / FGSC A1100 / Af293) (Neosartorya fumigata)).